The following is a 323-amino-acid chain: RING-H2 finger protein ATL32 (323 aa).

A signal peptide spans 1–28 (MMTRVECFNPHRWIILHVAIIIQSKANA). A helical membrane pass occupies residues 47-67 (TTVFAVLVTLFFLTGLLSVYI). Residues 124 to 166 (CAICLNELEDHETVRLLPICNHLFHIDCIDTWLYSHATCPVCR) form an RING-type; atypical zinc finger. The disordered stretch occupies residues 210–229 (SSEISGKFPRSNSTGHSMDR).

The protein belongs to the RING-type zinc finger family. ATL subfamily.

The protein resides in the membrane. The enzyme catalyses S-ubiquitinyl-[E2 ubiquitin-conjugating enzyme]-L-cysteine + [acceptor protein]-L-lysine = [E2 ubiquitin-conjugating enzyme]-L-cysteine + N(6)-ubiquitinyl-[acceptor protein]-L-lysine.. The protein operates within protein modification; protein ubiquitination. This is RING-H2 finger protein ATL32 (ATL32) from Arabidopsis thaliana (Mouse-ear cress).